The chain runs to 501 residues: ATP synthase subunit alpha (501 aa).

169–176 (GDRQTGKT) provides a ligand contact to ATP.

The protein belongs to the ATPase alpha/beta chains family. In terms of assembly, F-type ATPases have 2 components, CF(1) - the catalytic core - and CF(0) - the membrane proton channel. CF(1) has five subunits: alpha(3), beta(3), gamma(1), delta(1), epsilon(1). CF(0) has three main subunits: a(1), b(2) and c(9-12). The alpha and beta chains form an alternating ring which encloses part of the gamma chain. CF(1) is attached to CF(0) by a central stalk formed by the gamma and epsilon chains, while a peripheral stalk is formed by the delta and b chains.

It localises to the cell membrane. The enzyme catalyses ATP + H2O + 4 H(+)(in) = ADP + phosphate + 5 H(+)(out). Its function is as follows. Produces ATP from ADP in the presence of a proton gradient across the membrane. The alpha chain is a regulatory subunit. The protein is ATP synthase subunit alpha of Desulforamulus reducens (strain ATCC BAA-1160 / DSM 100696 / MI-1) (Desulfotomaculum reducens).